The primary structure comprises 444 residues: uncharacterized protein (444 aa).

The N-terminal 72 residues, M1–R72, are a transit peptide targeting the chloroplast. Residues H77 to K107 are disordered. Over residues S92–D101 the composition is skewed to polar residues. The 98-residue stretch at E175–I272 folds into the CRM domain. Residues D292–E355 adopt a coiled-coil conformation. 2 disordered regions span residues E344–S364 and K392–D426. Acidic residues predominate over residues C346–G357. Residues D406–D426 are compositionally biased toward basic and acidic residues.

The protein resides in the plastid. It localises to the chloroplast. This is an uncharacterized protein from Arabidopsis thaliana (Mouse-ear cress).